Consider the following 203-residue polypeptide: NAD(P)H dehydrogenase (quinone) (203 aa).

Residues 3-194 (VLIAYYSMYG…AAARYQGKHV (192 aa)) form the Flavodoxin-like domain. FMN is bound by residues 9-14 (SMYGHI) and 82-84 (TRF). Y11 serves as a coordination point for NAD(+). W102 is a binding site for substrate. FMN is bound by residues 117 to 123 (SSATQHG) and H138.

This sequence belongs to the WrbA family. Requires FMN as cofactor.

The catalysed reaction is a quinone + NADH + H(+) = a quinol + NAD(+). It carries out the reaction a quinone + NADPH + H(+) = a quinol + NADP(+). This Geotalea uraniireducens (strain Rf4) (Geobacter uraniireducens) protein is NAD(P)H dehydrogenase (quinone).